Here is a 156-residue protein sequence, read N- to C-terminus: Regulatory protein RecX (156 aa).

This sequence belongs to the RecX family.

Its subcellular location is the cytoplasm. In terms of biological role, modulates RecA activity. The protein is Regulatory protein RecX of Pseudomonas putida (strain W619).